A 382-amino-acid chain; its full sequence is Galactokinase (382 aa).

Substrate is bound at residue 34 to 37; that stretch reads EHTD. An ATP-binding site is contributed by 124 to 130; sequence GAGLSSS. The Mg(2+) site is built by S130 and E162. D174 (proton acceptor) is an active-site residue. Residue Y223 participates in substrate binding.

The protein belongs to the GHMP kinase family. GalK subfamily.

The protein resides in the cytoplasm. It carries out the reaction alpha-D-galactose + ATP = alpha-D-galactose 1-phosphate + ADP + H(+). It functions in the pathway carbohydrate metabolism; galactose metabolism. Catalyzes the transfer of the gamma-phosphate of ATP to D-galactose to form alpha-D-galactose-1-phosphate (Gal-1-P). The sequence is that of Galactokinase from Escherichia coli O7:K1 (strain IAI39 / ExPEC).